We begin with the raw amino-acid sequence, 416 residues long: Phosphoglycerate kinase (416 aa).

(2R)-3-phosphoglycerate-binding residues include V23, D24, F25, N26, Q39, R40, S63, H64, G66, R67, L122, R123, H170, and R171. G214 contacts ADP. G214 lines the CDP pocket. Residues A215 and K216 each coordinate AMP. Residue A215 coordinates ATP. A215 provides a ligand contact to Mg(2+). D219 serves as a coordination point for CDP. Mg(2+) is bound at residue D219. AMP is bound at residue K220. Residue K220 participates in ATP binding. G238 lines the ADP pocket. G238 lines the CDP pocket. Residues G239 and G312 each contribute to the AMP site. ATP contacts are provided by G239 and G312. Residues G337, A339, and F342 each coordinate CDP. F342 contributes to the ADP binding site. Residue E343 coordinates AMP. Residues E343, D374, and T375 each contribute to the ATP site. D374 contributes to the Mg(2+) binding site.

It belongs to the phosphoglycerate kinase family. Monomer. It depends on Mg(2+) as a cofactor.

Its subcellular location is the cytoplasm. It is found in the mitochondrion. The catalysed reaction is (2R)-3-phosphoglycerate + ATP = (2R)-3-phospho-glyceroyl phosphate + ADP. It functions in the pathway carbohydrate degradation; glycolysis; pyruvate from D-glyceraldehyde 3-phosphate: step 2/5. Its function is as follows. Catalyzes one of the two ATP producing reactions in the glycolytic pathway via the reversible conversion of 1,3-diphosphoglycerate to 3-phosphoglycerate. Both L- and D- forms of purine and pyrimidine nucleotides can be used as substrates, but the activity is much lower on pyrimidines. Negatively regulates the biosynthesis of acetyl-CoA from pyruvate in the mitochondrion. This Hypocrea jecorina (Trichoderma reesei) protein is Phosphoglycerate kinase (pgk1).